We begin with the raw amino-acid sequence, 230 residues long: Probable methylthioribulose-1-phosphate dehydratase (230 aa).

A substrate-binding site is contributed by cysteine 87. Positions 105 and 107 each coordinate Zn(2+). Glutamate 129 serves as the catalytic Proton donor/acceptor. Histidine 185 serves as a coordination point for Zn(2+).

This sequence belongs to the aldolase class II family. MtnB subfamily. The cofactor is Zn(2+).

It localises to the cytoplasm. It carries out the reaction 5-(methylsulfanyl)-D-ribulose 1-phosphate = 5-methylsulfanyl-2,3-dioxopentyl phosphate + H2O. The protein operates within amino-acid biosynthesis; L-methionine biosynthesis via salvage pathway; L-methionine from S-methyl-5-thio-alpha-D-ribose 1-phosphate: step 2/6. Functionally, catalyzes the dehydration of methylthioribulose-1-phosphate (MTRu-1-P) into 2,3-diketo-5-methylthiopentyl-1-phosphate (DK-MTP-1-P). This Drosophila virilis (Fruit fly) protein is Probable methylthioribulose-1-phosphate dehydratase.